A 418-amino-acid polypeptide reads, in one-letter code: Gamma-glutamyl phosphate reductase (418 aa).

The protein belongs to the gamma-glutamyl phosphate reductase family.

It localises to the cytoplasm. The enzyme catalyses L-glutamate 5-semialdehyde + phosphate + NADP(+) = L-glutamyl 5-phosphate + NADPH + H(+). The protein operates within amino-acid biosynthesis; L-proline biosynthesis; L-glutamate 5-semialdehyde from L-glutamate: step 2/2. In terms of biological role, catalyzes the NADPH-dependent reduction of L-glutamate 5-phosphate into L-glutamate 5-semialdehyde and phosphate. The product spontaneously undergoes cyclization to form 1-pyrroline-5-carboxylate. This chain is Gamma-glutamyl phosphate reductase, found in Lacticaseibacillus paracasei (strain ATCC 334 / BCRC 17002 / CCUG 31169 / CIP 107868 / KCTC 3260 / NRRL B-441) (Lactobacillus paracasei).